We begin with the raw amino-acid sequence, 325 residues long: 4-hydroxy-3-methylbut-2-enyl diphosphate reductase (325 aa).

Cys-13 is a [4Fe-4S] cluster binding site. Residues His-42 and His-76 each contribute to the (2E)-4-hydroxy-3-methylbut-2-enyl diphosphate site. The dimethylallyl diphosphate site is built by His-42 and His-76. The isopentenyl diphosphate site is built by His-42 and His-76. [4Fe-4S] cluster is bound at residue Cys-98. His-126 is a binding site for (2E)-4-hydroxy-3-methylbut-2-enyl diphosphate. His-126 is a dimethylallyl diphosphate binding site. His-126 contributes to the isopentenyl diphosphate binding site. Catalysis depends on Glu-128, which acts as the Proton donor. Thr-169 is a binding site for (2E)-4-hydroxy-3-methylbut-2-enyl diphosphate. Cys-230 contributes to the [4Fe-4S] cluster binding site. The (2E)-4-hydroxy-3-methylbut-2-enyl diphosphate site is built by Ser-258, Ser-259, Asn-260, and Ser-306. The dimethylallyl diphosphate site is built by Ser-258, Ser-259, Asn-260, and Ser-306. Ser-258, Ser-259, Asn-260, and Ser-306 together coordinate isopentenyl diphosphate.

The protein belongs to the IspH family. [4Fe-4S] cluster is required as a cofactor.

The catalysed reaction is isopentenyl diphosphate + 2 oxidized [2Fe-2S]-[ferredoxin] + H2O = (2E)-4-hydroxy-3-methylbut-2-enyl diphosphate + 2 reduced [2Fe-2S]-[ferredoxin] + 2 H(+). It catalyses the reaction dimethylallyl diphosphate + 2 oxidized [2Fe-2S]-[ferredoxin] + H2O = (2E)-4-hydroxy-3-methylbut-2-enyl diphosphate + 2 reduced [2Fe-2S]-[ferredoxin] + 2 H(+). It functions in the pathway isoprenoid biosynthesis; dimethylallyl diphosphate biosynthesis; dimethylallyl diphosphate from (2E)-4-hydroxy-3-methylbutenyl diphosphate: step 1/1. The protein operates within isoprenoid biosynthesis; isopentenyl diphosphate biosynthesis via DXP pathway; isopentenyl diphosphate from 1-deoxy-D-xylulose 5-phosphate: step 6/6. Functionally, catalyzes the conversion of 1-hydroxy-2-methyl-2-(E)-butenyl 4-diphosphate (HMBPP) into a mixture of isopentenyl diphosphate (IPP) and dimethylallyl diphosphate (DMAPP). Acts in the terminal step of the DOXP/MEP pathway for isoprenoid precursor biosynthesis. The sequence is that of 4-hydroxy-3-methylbut-2-enyl diphosphate reductase from Prosthecochloris aestuarii (strain DSM 271 / SK 413).